The following is a 175-amino-acid chain: Epididymal-specific lipocalin-8 (175 aa).

Positions 1 to 25 (MPGAAEALPTVTVTLVAGAVPPASG) are cleaved as a signal peptide. N-linked (GlcNAc...) asparagine glycans are attached at residues Asn-66 and Asn-74. A disulfide bridge links Cys-79 with Cys-166.

It belongs to the calycin superfamily. Lipocalin family.

It is found in the secreted. In terms of biological role, may play a role in male fertility. May act as a retinoid carrier protein within the epididymis. This chain is Epididymal-specific lipocalin-8 (LCN8), found in Homo sapiens (Human).